We begin with the raw amino-acid sequence, 309 residues long: Manganese-dependent inorganic pyrophosphatase (309 aa).

Residues histidine 9, aspartate 13, aspartate 15, aspartate 75, histidine 97, and aspartate 149 each coordinate Mn(2+).

Homodimer. It depends on Mn(2+) as a cofactor.

It is found in the cytoplasm. The catalysed reaction is diphosphate + H2O = 2 phosphate + H(+). The polypeptide is Manganese-dependent inorganic pyrophosphatase (ppaC) (Bacillus subtilis (strain 168)).